We begin with the raw amino-acid sequence, 332 residues long: Acryloyl-coenzyme A reductase (332 aa).

Cys-38 contributes to the Zn(2+) binding site. Tyr-39 contacts NADP(+). Positions 60, 90, 93, 96, 104, and 146 each coordinate Zn(2+). NADP(+) is bound by residues Ser-172–Val-175 and Thr-194–Ser-196.

The protein belongs to the zinc-containing alcohol dehydrogenase family. As to quaternary structure, monomer. It depends on Zn(2+) as a cofactor.

It catalyses the reaction propanoyl-CoA + NADP(+) = acryloyl-CoA + NADPH + H(+). Functionally, plays a role in autotrophic carbon fixation via the 3-hydroxypropionate/4-hydroxybutyrate cycle. Catalyzes the acryloyl-CoA dependent NADPH oxidation and formation of propionyl-CoA. This Metallosphaera sedula (strain ATCC 51363 / DSM 5348 / JCM 9185 / NBRC 15509 / TH2) protein is Acryloyl-coenzyme A reductase.